A 371-amino-acid chain; its full sequence is DNA-directed RNA polymerase subunit alpha (371 aa).

Positions 1–248 (MSVKYGKFEM…KHFEVFNQFN (248 aa)) are alpha N-terminal domain (alpha-NTD). The tract at residues 264-371 (DQDELMDKLS…KELVKHEDAK (108 aa)) is alpha C-terminal domain (alpha-CTD).

It belongs to the RNA polymerase alpha chain family. As to quaternary structure, homodimer. The RNAP catalytic core consists of 2 alpha, 1 beta, 1 beta' and 1 omega subunit. When a sigma factor is associated with the core the holoenzyme is formed, which can initiate transcription.

The catalysed reaction is RNA(n) + a ribonucleoside 5'-triphosphate = RNA(n+1) + diphosphate. Its function is as follows. DNA-dependent RNA polymerase catalyzes the transcription of DNA into RNA using the four ribonucleoside triphosphates as substrates. The protein is DNA-directed RNA polymerase subunit alpha of Protochlamydia amoebophila (strain UWE25).